A 47-amino-acid polypeptide reads, in one-letter code: PhoP/PhoQ regulator MgrB (47 aa).

A helical membrane pass occupies residues 6-26 (WVLLIVIIAGCLLLWTQMLNV).

The protein belongs to the MgrB family. As to quaternary structure, may form homooligomers. Probably interacts with the periplasmic domain of PhoQ.

It is found in the cell inner membrane. Its function is as follows. PhoP-regulated transcription is redox-sensitive, being activated when the periplasm becomes more reducing. MgrB acts between DsbA/DsbB and PhoP/PhoQ in this pathway. Represses PhoP/PhoQ signaling, possibly by binding to the periplasmic domain of PhoQ, altering its activity and that of downstream effector PhoP. The protein is PhoP/PhoQ regulator MgrB of Klebsiella pneumoniae (strain 342).